The sequence spans 223 residues: Mediator of RNA polymerase II transcription subunit 8 (223 aa).

The interval 2–138 is interaction with TBP1; that stretch reads SQSTASLVPE…VRETSGVTTA (137 aa). A coiled-coil region spans residues 33–59; the sequence is LDAVRMRLAQLTHSLRRIRDEMSKAEL.

This sequence belongs to the Mediator complex subunit 8 family. As to quaternary structure, component of the Mediator complex, which is composed of at least 21 subunits that form three structurally distinct submodules. The Mediator head module contains MED6, MED8, MED11, SRB4/MED17, SRB5/MED18, ROX3/MED19, SRB2/MED20 and SRB6/MED22, the middle module contains MED1, MED4, NUT1/MED5, MED7, CSE2/MED9, NUT2/MED10, SRB7/MED21 and SOH1/MED31, and the tail module contains MED2, PGD1/MED3, RGR1/MED14, GAL11/MED15 and SIN4/MED16. The head and the middle modules interact directly with RNA polymerase II, whereas the elongated tail module interacts with gene-specific regulatory proteins. MED8 interacts directly with SRB5/MED18. Also interacts with Hexokinase B (HXK2). Interacts with TBP1.

It localises to the nucleus. Its function is as follows. Component of the Mediator complex, a coactivator involved in the regulated transcription of nearly all RNA polymerase II-dependent genes. Mediator functions as a bridge to convey information from gene-specific regulatory proteins to the basal RNA polymerase II transcription machinery. The Mediator complex, having a compact conformation in its free form, is recruited to promoters by direct interactions with regulatory proteins and serves for the assembly of a functional preinitiation complex with RNA polymerase II and the general transcription factors. The Mediator complex unfolds to an extended conformation and partially surrounds RNA polymerase II, specifically interacting with the unphosphorylated form of the C-terminal domain (CTD) of RNA polymerase II. The Mediator complex dissociates from the RNA polymerase II holoenzyme and stays at the promoter when transcriptional elongation begins. MED8 binds to the consensus sequence 5'-[AC][AG]GAAAT-3' in both the UAS of SUC2 and the DRS2 of HXK2. This is Mediator of RNA polymerase II transcription subunit 8 (MED8) from Saccharomyces cerevisiae (strain ATCC 204508 / S288c) (Baker's yeast).